Here is a 384-residue protein sequence, read N- to C-terminus: Formate-dependent phosphoribosylglycinamide formyltransferase (384 aa).

N(1)-(5-phospho-beta-D-ribosyl)glycinamide-binding positions include 14–15 and glutamate 74; that span reads EL. Residues arginine 106, lysine 147, 152-157, 187-190, and glutamate 195 each bind ATP; these read SSGKGQ and EEFI. One can recognise an ATP-grasp domain in the interval 111–300; that stretch reads RLAAETLHLP…EFALHVRAVL (190 aa). Residues glutamate 259 and glutamate 271 each contribute to the Mg(2+) site. N(1)-(5-phospho-beta-D-ribosyl)glycinamide contacts are provided by residues aspartate 278, lysine 348, and 355 to 356; that span reads RR.

It belongs to the PurK/PurT family. Homodimer.

It carries out the reaction N(1)-(5-phospho-beta-D-ribosyl)glycinamide + formate + ATP = N(2)-formyl-N(1)-(5-phospho-beta-D-ribosyl)glycinamide + ADP + phosphate + H(+). It functions in the pathway purine metabolism; IMP biosynthesis via de novo pathway; N(2)-formyl-N(1)-(5-phospho-D-ribosyl)glycinamide from N(1)-(5-phospho-D-ribosyl)glycinamide (formate route): step 1/1. In terms of biological role, involved in the de novo purine biosynthesis. Catalyzes the transfer of formate to 5-phospho-ribosyl-glycinamide (GAR), producing 5-phospho-ribosyl-N-formylglycinamide (FGAR). Formate is provided by PurU via hydrolysis of 10-formyl-tetrahydrofolate. In Bacillus velezensis (strain DSM 23117 / BGSC 10A6 / LMG 26770 / FZB42) (Bacillus amyloliquefaciens subsp. plantarum), this protein is Formate-dependent phosphoribosylglycinamide formyltransferase.